We begin with the raw amino-acid sequence, 355 residues long: tRNA uridine(34) hydroxylase (355 aa).

The Rhodanese domain occupies 146-240; sequence DDPDTVFVDM…YARQAKAQGL (95 aa). The Cysteine persulfide intermediate role is filled by Cys200.

Belongs to the TrhO family.

It catalyses the reaction uridine(34) in tRNA + AH2 + O2 = 5-hydroxyuridine(34) in tRNA + A + H2O. Catalyzes oxygen-dependent 5-hydroxyuridine (ho5U) modification at position 34 in tRNAs. This chain is tRNA uridine(34) hydroxylase, found in Pectobacterium carotovorum subsp. carotovorum (strain PC1).